A 239-amino-acid chain; its full sequence is Superoxide dismutase [Mn] 3 (239 aa).

Residues 1-19 (ASTQQTPAQSPTASPTVST) show a composition bias toward polar residues. The tract at residues 1–20 (ASTQQTPAQSPTASPTVSTP) is disordered. An N-terminal signal peptide occupies residues 1-30 (ASTQQTPAQSPTASPTVSTPVAYVDRPLTA). Mn(2+) contacts are provided by H57, H112, D195, and H199.

The protein belongs to the iron/manganese superoxide dismutase family. Homodimer. Mn(2+) serves as cofactor.

The catalysed reaction is 2 superoxide + 2 H(+) = H2O2 + O2. Destroys superoxide anion radicals which are normally produced within the cells and which are toxic to biological systems. The chain is Superoxide dismutase [Mn] 3 (sodA3) from Leptolyngbya boryana (Plectonema boryanum).